The chain runs to 437 residues: Protein RecA (437 aa).

Residue 69–76 participates in ATP binding; sequence GPESSGKT. The disordered stretch occupies residues 343–437; that stretch reads HDAAVRTSPD…GNGKSVKRKG (95 aa). Composition is skewed to polar residues over residues 350–371, 380–391, and 400–426; these read SPDTNSRKVSGTGAVHTTSGSP, GAVNNSRDSTGG, and LNLSVNRDVSTDTVSSKISDATHNQKP.

Belongs to the RecA family.

Its subcellular location is the cytoplasm. Its function is as follows. Can catalyze the hydrolysis of ATP in the presence of single-stranded DNA, the ATP-dependent uptake of single-stranded DNA by duplex DNA, and the ATP-dependent hybridization of homologous single-stranded DNAs. It interacts with LexA causing its activation and leading to its autocatalytic cleavage. The protein is Protein RecA of Tropheryma whipplei (strain Twist) (Whipple's bacillus).